The following is a 29-amino-acid chain: Cyclotide psyleio C (29 aa).

Positions 1-29 (GDLPVCGETCFGGTCNTPGCVCAWPVCTR) form a cross-link, cyclopeptide (Gly-Arg). 3 cysteine pairs are disulfide-bonded: Cys6/Cys20, Cys10/Cys22, and Cys15/Cys27.

Post-translationally, this is a cyclic peptide.

Functionally, probably participates in a plant defense mechanism. The protein is Cyclotide psyleio C of Psychotria leiocarpa.